We begin with the raw amino-acid sequence, 1794 residues long: Protein TIC 214 (1794 aa).

6 helical membrane passes run 23–43 (VVVGLYYGFITTFSIGPSYLF), 64–84 (FIMGQFMMLISIYYTPLHLAL), 87–107 (PHTITVLVLPYLLFHFFWNNH), 124–144 (LSIQCVFLNNLIFQLFNHFIL), 172–192 (VGWLIGHILFMKWVGLVLFWI), and 218–238 (ILSILLFITCVYYLGRIPSPI). A disordered region spans residues 244–307 (KETSETGETE…REGVNGKEKT (64 aa)). The span at 248 to 258 (ETGETEEETDV) shows a compositional bias: acidic residues. Composition is skewed to basic and acidic residues over residues 259–276 (EIERTSETKGTEQEKEGS) and 286–307 (SEEKGDPDKIDEREGVNGKEKT).

The protein belongs to the TIC214 family. In terms of assembly, part of the Tic complex.

Its subcellular location is the plastid. The protein resides in the chloroplast inner membrane. Its function is as follows. Involved in protein precursor import into chloroplasts. May be part of an intermediate translocation complex acting as a protein-conducting channel at the inner envelope. The polypeptide is Protein TIC 214 (Amborella trichopoda).